A 365-amino-acid polypeptide reads, in one-letter code: Probable receptor-like protein kinase At2g47060 (365 aa).

The segment at 18-48 (DYGGRHNQAKHFPPGNDARHHQASETAQKGP) is disordered. Positions 73 to 353 (FGSNSLIGEG…IVVKALQPLL (281 aa)) constitute a Protein kinase domain. ATP-binding positions include 79–87 (IGEGSYGRV) and Lys-101. Tyr-145 is modified (phosphotyrosine). The active-site Proton acceptor is Asp-203. 2 positions are modified to phosphoserine: Ser-207 and Ser-237. A phosphothreonine mark is found at Thr-238 and Thr-243. Tyr-251 is subject to Phosphotyrosine.

This sequence belongs to the protein kinase superfamily. Ser/Thr protein kinase family.

It catalyses the reaction L-seryl-[protein] + ATP = O-phospho-L-seryl-[protein] + ADP + H(+). The enzyme catalyses L-threonyl-[protein] + ATP = O-phospho-L-threonyl-[protein] + ADP + H(+). This Arabidopsis thaliana (Mouse-ear cress) protein is Probable receptor-like protein kinase At2g47060.